A 121-amino-acid chain; its full sequence is MSSPHVLVVDDTHVDRHVVSMALMRHNVRVTAVESVMQALMFLDSEHDVDMIVSDYCMPDMTGYNLLMEVKKSPKLAHLPVVIASSDNIPERIRKCLDGGAKDYILKPVKIVDVPRIMKYI.

Residues 5 to 121 (HVLVVDDTHV…VDVPRIMKYI (117 aa)) enclose the Response regulatory domain. 4-aspartylphosphate is present on aspartate 55.

The protein belongs to the ARR family. Type-A subfamily. Two-component system major event consists of a His-to-Asp phosphorelay between a sensor histidine kinase (HK) and a response regulator (RR). In plants, the His-to-Asp phosphorelay involves an additional intermediate named Histidine-containing phosphotransfer protein (HPt). This multistep phosphorelay consists of a His-Asp-His-Asp sequential transfer of a phosphate group between first a His and an Asp of the HK protein, followed by the transfer to a conserved His of the HPt protein and finally the transfer to an Asp in the receiver domain of the RR protein. In terms of tissue distribution, expressed in mature leaves, and at low levels in roots, shoots and flowers.

Its function is as follows. Functions as a response regulator involved in His-to-Asp phosphorelay signal transduction system. Phosphorylation of the Asp residue in the receiver domain activates the ability of the protein to promote the transcription of target genes. Type-A response regulators seem to act as negative regulators of the cytokinin signaling. This is Two-component response regulator ORR8 from Oryza sativa subsp. indica (Rice).